A 317-amino-acid chain; its full sequence is Beta-ketoacyl-[acyl-carrier-protein] synthase III (317 aa).

Catalysis depends on residues Cys112 and His244. The tract at residues Gln245–Arg249 is ACP-binding. Asn274 is a catalytic residue.

Belongs to the thiolase-like superfamily. FabH family. As to quaternary structure, homodimer.

It is found in the cytoplasm. The catalysed reaction is malonyl-[ACP] + acetyl-CoA + H(+) = 3-oxobutanoyl-[ACP] + CO2 + CoA. The protein operates within lipid metabolism; fatty acid biosynthesis. Functionally, catalyzes the condensation reaction of fatty acid synthesis by the addition to an acyl acceptor of two carbons from malonyl-ACP. Catalyzes the first condensation reaction which initiates fatty acid synthesis and may therefore play a role in governing the total rate of fatty acid production. Possesses both acetoacetyl-ACP synthase and acetyl transacylase activities. Its substrate specificity determines the biosynthesis of branched-chain and/or straight-chain of fatty acids. This chain is Beta-ketoacyl-[acyl-carrier-protein] synthase III, found in Salmonella arizonae (strain ATCC BAA-731 / CDC346-86 / RSK2980).